Here is a 555-residue protein sequence, read N- to C-terminus: Glutamine--tRNA ligase (555 aa).

Residues 34–44 carry the 'HIGH' region motif; the sequence is PEPNGYLHIGH. Residues 35-37 and 41-47 each bind ATP; these read EPN and HIGHAKS. L-glutamine is bound by residues Asp-67 and Tyr-212. ATP is bound by residues Thr-231, 261 to 262, and 269 to 271; these read RL and MSK. A 'KMSKS' region motif is present at residues 268-272; that stretch reads VMSKR.

This sequence belongs to the class-I aminoacyl-tRNA synthetase family. In terms of assembly, monomer.

It is found in the cytoplasm. It carries out the reaction tRNA(Gln) + L-glutamine + ATP = L-glutaminyl-tRNA(Gln) + AMP + diphosphate. The polypeptide is Glutamine--tRNA ligase (Proteus mirabilis (strain HI4320)).